We begin with the raw amino-acid sequence, 519 residues long: Alternative NAD(P)H-ubiquinone oxidoreductase C1, chloroplastic/mitochondrial (519 aa).

Residues 1-52 constitute a chloroplast and mitochondrion transit peptide; that stretch reads MAVLSSVSSLIPFSYGATRLTSKASLASRTSGFNLSSRWNSTRNSPMLYLSR. Residue 82–118 coordinates FAD; it reads RVCILGGGFGGLYTALRLESLVWPEDKKPQVVLVDQS. 246–282 is an NAD(+) binding site; the sequence is IKVAVVGCGYAGVELAATISERLQDRGIVQSINVSKN.

Belongs to the NADH dehydrogenase family. Requires FAD as cofactor. In terms of tissue distribution, flowers, roots, leaves and stems.

The protein resides in the mitochondrion. The protein localises to the mitochondrion inner membrane. It is found in the plastid. It localises to the chloroplast. Its subcellular location is the plastoglobule. It catalyses the reaction a quinone + NADH + H(+) = a quinol + NAD(+). It carries out the reaction a ubiquinone + NADH + H(+) = a ubiquinol + NAD(+). The catalysed reaction is demethylphylloquinone + NADPH + H(+) = demethylphylloquinol + NADP(+). With respect to regulation, inhibited by dicumarol. Its function is as follows. Bifunctional oxidoreductase ables to act both on prenyl naphthoquinones and on prenyl benzoquinones. May serve a respiratory function. Involved in an electron flow toward the plastoglobule plastoquinone pool. Required for plastochromanol-8 accumulation and for phylloquinone (vitamin K1) production. Probably not directly involved in cyclic or chlororespiratory electron flows under standard growth conditions, but participates in the redox metabolism of plastoquinone-9 and the tocophrol recycling-intermediate alpha-tocopherol quinone. Catalyzes the penultimate step in the biosynthesis of vitamin K1. This Arabidopsis thaliana (Mouse-ear cress) protein is Alternative NAD(P)H-ubiquinone oxidoreductase C1, chloroplastic/mitochondrial.